The sequence spans 313 residues: tRNA-cytidine(32) 2-sulfurtransferase (313 aa).

The short motif at 46–51 is the PP-loop motif element; sequence SGGKDS. Positions 121, 124, and 212 each coordinate [4Fe-4S] cluster.

Belongs to the TtcA family. Homodimer. Mg(2+) serves as cofactor. The cofactor is [4Fe-4S] cluster.

The protein localises to the cytoplasm. It carries out the reaction cytidine(32) in tRNA + S-sulfanyl-L-cysteinyl-[cysteine desulfurase] + AH2 + ATP = 2-thiocytidine(32) in tRNA + L-cysteinyl-[cysteine desulfurase] + A + AMP + diphosphate + H(+). It participates in tRNA modification. Its function is as follows. Catalyzes the ATP-dependent 2-thiolation of cytidine in position 32 of tRNA, to form 2-thiocytidine (s(2)C32). The sulfur atoms are provided by the cysteine/cysteine desulfurase (IscS) system. The protein is tRNA-cytidine(32) 2-sulfurtransferase of Nitrosomonas eutropha (strain DSM 101675 / C91 / Nm57).